Here is a 329-residue protein sequence, read N- to C-terminus: Minor capsid protein A1 (329 aa).

Its subcellular location is the virion. Minor capsid protein. This chain is Minor capsid protein A1, found in Escherichia coli (Bacteriophage Q-beta).